A 295-amino-acid chain; its full sequence is Aspartate carbamoyltransferase catalytic subunit (295 aa).

Carbamoyl phosphate contacts are provided by Arg-49 and Thr-50. Lys-77 serves as a coordination point for L-aspartate. Residues Arg-99, His-127, and Gln-130 each coordinate carbamoyl phosphate. L-aspartate contacts are provided by Arg-161 and Arg-212. Carbamoyl phosphate contacts are provided by Gly-251 and Pro-252.

It belongs to the aspartate/ornithine carbamoyltransferase superfamily. ATCase family. As to quaternary structure, heterododecamer (2C3:3R2) of six catalytic PyrB chains organized as two trimers (C3), and six regulatory PyrI chains organized as three dimers (R2).

It catalyses the reaction carbamoyl phosphate + L-aspartate = N-carbamoyl-L-aspartate + phosphate + H(+). It functions in the pathway pyrimidine metabolism; UMP biosynthesis via de novo pathway; (S)-dihydroorotate from bicarbonate: step 2/3. Functionally, catalyzes the condensation of carbamoyl phosphate and aspartate to form carbamoyl aspartate and inorganic phosphate, the committed step in the de novo pyrimidine nucleotide biosynthesis pathway. This chain is Aspartate carbamoyltransferase catalytic subunit, found in Campylobacter jejuni subsp. doylei (strain ATCC BAA-1458 / RM4099 / 269.97).